The following is a 91-amino-acid chain: B3 domain-containing protein Os03g0164300 (91 aa).

The segment at residues 1 to 91 (MTNAKMTFAV…VLVLKVHVLK (91 aa)) is a DNA-binding region (TF-B3).

Its subcellular location is the nucleus. In Oryza sativa subsp. japonica (Rice), this protein is B3 domain-containing protein Os03g0164300.